The chain runs to 272 residues: CD40 ligand (272 aa).

Residues 1–23 lie on the Cytoplasmic side of the membrane; the sequence is MNEAYSPAAPRPMGSTSPSTMKM. A helical; Signal-anchor for type II membrane protein membrane pass occupies residues 24–44; the sequence is FMCFLSVFMVVQTIGTVLFCL. Over 45 to 272 the chain is Extracellular; the sequence is YLHMKMDKME…GNTYFGMFKL (228 aa). N-linked (GlcNAc...) asparagine glycans are attached at residues Asn124 and Asn146. The region spanning 136–272 is the THD domain; it reads IATHLAGVKS…GNTYFGMFKL (137 aa). Cys190 and Cys229 form a disulfide bridge. Asn251 is a glycosylation site (N-linked (GlcNAc...) asparagine).

Belongs to the tumor necrosis factor family. Homotrimer. Interacts with CD28. CD40 ligand, soluble form: Exists as either a monomer or a homotrimer. Forms a ternary complex between CD40 and integrins for CD40-CD40LG signaling. The soluble form derives from the membrane form by proteolytic processing.

The protein localises to the cell membrane. It localises to the cell surface. Its subcellular location is the secreted. In terms of biological role, cytokine that acts as a ligand to CD40/TNFRSF5. Costimulates T-cell proliferation and cytokine production. Induces the activation of NF-kappa-B. Mediates B-cell proliferation in the absence of co-stimulus as well as IgE production in the presence of IL4. Involved in immunoglobulin class switching. Functionally, acts as a ligand for integrins, specifically ITGA5:ITGB1 and ITGAV:ITGB3; both integrins and the CD40 receptor are required for activation of CD40-CD40LG signaling, which have cell-type dependent effects, such as B-cell activation, NF-kappa-B signaling and anti-apoptotic signaling. In Gallus gallus (Chicken), this protein is CD40 ligand (CD40LG).